The chain runs to 299 residues: UDP-3-O-acyl-N-acetylglucosamine deacetylase (299 aa).

Positions 75, 232, and 236 each coordinate Zn(2+). The Proton donor role is filled by histidine 259.

The protein belongs to the LpxC family. Zn(2+) serves as cofactor.

It catalyses the reaction a UDP-3-O-[(3R)-3-hydroxyacyl]-N-acetyl-alpha-D-glucosamine + H2O = a UDP-3-O-[(3R)-3-hydroxyacyl]-alpha-D-glucosamine + acetate. It participates in glycolipid biosynthesis; lipid IV(A) biosynthesis; lipid IV(A) from (3R)-3-hydroxytetradecanoyl-[acyl-carrier-protein] and UDP-N-acetyl-alpha-D-glucosamine: step 2/6. Catalyzes the hydrolysis of UDP-3-O-myristoyl-N-acetylglucosamine to form UDP-3-O-myristoylglucosamine and acetate, the committed step in lipid A biosynthesis. The sequence is that of UDP-3-O-acyl-N-acetylglucosamine deacetylase from Helicobacter hepaticus (strain ATCC 51449 / 3B1).